The following is a 367-amino-acid chain: MIESEHRPTQIRVNLDAIAENFEQVMTNLPPKTEAFAVVKANAYGHGAVAVAKKLSSQAAGFCVSNLDEALELRKAGIEHPILILGVVPVRFLPVAHQLNISVTVASLDWLQDAKDLEADLSGLTVHLKLDTGMGRIGFRKIADLLQAIAILEELEYDIEGVYTHFATADEVEQAHFESQLSVFKEFLDVLPITPRWIHASNSATSIWHADTVFNLVRLGNILYGLNPSGRVLELPFGVQPALSLVSEIVHVKQVEAGTTIGYGATYHSTDSEWIATVPIGYADGLVRSLQGLSVLVDGQACEIVGRISMDQITIRLPRAYPLGQKVTLIGQDGDKTISVQEWADRIGTINYEVVCLLTDRLPRIFE.

K40 (proton acceptor; specific for D-alanine) is an active-site residue. N6-(pyridoxal phosphate)lysine is present on K40. R136 lines the substrate pocket. The active-site Proton acceptor; specific for L-alanine is the Y263. Substrate is bound at residue M310.

This sequence belongs to the alanine racemase family. Requires pyridoxal 5'-phosphate as cofactor.

The enzyme catalyses L-alanine = D-alanine. It functions in the pathway amino-acid biosynthesis; D-alanine biosynthesis; D-alanine from L-alanine: step 1/1. Its function is as follows. Catalyzes the interconversion of L-alanine and D-alanine. May also act on other amino acids. In Streptococcus suis (strain 98HAH33), this protein is Alanine racemase (alr).